A 56-amino-acid polypeptide reads, in one-letter code: Large ribosomal subunit protein bL32 (56 aa).

A disordered region spans residues 1-40 (MAVQQNKKSRSKRGMRRSHDSLGTAQLSVDATSGELHRRH). The span at 7–16 (KKSRSKRGMR) shows a compositional bias: basic residues. A compositionally biased stretch (polar residues) spans 21 to 31 (SLGTAQLSVDA).

This sequence belongs to the bacterial ribosomal protein bL32 family.

The sequence is that of Large ribosomal subunit protein bL32 from Shewanella halifaxensis (strain HAW-EB4).